We begin with the raw amino-acid sequence, 397 residues long: Staphyloferrin A transporter (397 aa).

12 helical membrane passes run 10–30, 39–59, 67–87, 93–110, 137–157, 162–182, 213–233, 245–265, 271–292, 296–313, 333–353, and 358–378; these read FLLF…VLTT, IVNF…GAIA, LLRI…VLTY, PISV…LSAV, FIIN…LAVY, TFLA…PLHF, IFIT…LLPV, IFGI…LVLP, IGMV…LGVV, IVIM…SQWA, VLSI…LMSI, and FGIV…TMVF.

It belongs to the major facilitator superfamily.

It localises to the cell membrane. Involved in staphyloferrin A secretion. The sequence is that of Staphyloferrin A transporter from Staphylococcus aureus (strain NCTC 8325 / PS 47).